Consider the following 399-residue polypeptide: Bombesin receptor subtype-3 (399 aa).

The Extracellular segment spans residues 1-41 (MSQRQSQSPNQTLISITNDTETSSSVVSNDTTHKGWTGDNS). 3 N-linked (GlcNAc...) asparagine glycosylation sites follow: asparagine 10, asparagine 18, and asparagine 29. Residues 42-63 (PGIEALCAIYITYAGIISVGIL) traverse the membrane as a helical segment. The Cytoplasmic segment spans residues 64–82 (GNAILIKVFFKTKSMQTVP). Residues 83–103 (NIFITSLAFGDLLLLLTCVPV) traverse the membrane as a helical segment. The Extracellular segment spans residues 104–121 (DATHYLAEGWLFGKVGCK). Cysteine 120 and cysteine 203 are joined by a disulfide. A helical membrane pass occupies residues 122-143 (VLSFIRLTSVGVSVFTLTILSA). Over 144 to 163 (DRYKAVVKPLERQPPNAILK) the chain is Cytoplasmic. Residues 164-184 (TCAKAGGIWIVSMIFALPEAI) form a helical membrane-spanning segment. At 185–220 (FSNVYTFQDPNRNVTFESCNSYPISERLLQEIHSLL) the chain is on the extracellular side. Residues 221-241 (CFLVFYIIPLSIISVYYSLIA) traverse the membrane as a helical segment. The Cytoplasmic portion of the chain corresponds to 242–272 (RTLYKSTLNIPTEEQSHARKQIESRKRIAKT). A helical membrane pass occupies residues 273–293 (VLVLVALFALCWLPNHLLYLY). Over 294–313 (HSFTYESYANHSDVPFVIII) the chain is Extracellular. The helical transmembrane segment at 314 to 333 (FSRVLAFSNSCVNPFALYWL) threads the bilayer. Over 334–399 (SKTFQQHFKA…SSAKKGEDKV (66 aa)) the chain is Cytoplasmic. Cysteine 347 is lipidated: S-palmitoyl cysteine.

The protein belongs to the G-protein coupled receptor 1 family. Interacts with C6orf89.

The protein resides in the cell membrane. Functionally, role in sperm cell division, maturation, or function. This receptor mediates its action by association with G proteins that activate a phosphatidylinositol-calcium second messenger system. The sequence is that of Bombesin receptor subtype-3 (Brs3) from Mus musculus (Mouse).